Reading from the N-terminus, the 139-residue chain is D-ribose pyranase (139 aa).

His20 (proton donor) is an active-site residue. Substrate is bound by residues Asp28, His106, and 128–130 (YAN).

It belongs to the RbsD / FucU family. RbsD subfamily. Homodecamer.

Its subcellular location is the cytoplasm. The catalysed reaction is beta-D-ribopyranose = beta-D-ribofuranose. The protein operates within carbohydrate metabolism; D-ribose degradation; D-ribose 5-phosphate from beta-D-ribopyranose: step 1/2. Functionally, catalyzes the interconversion of beta-pyran and beta-furan forms of D-ribose. The protein is D-ribose pyranase of Salmonella typhi.